A 131-amino-acid chain; its full sequence is Holo-[acyl-carrier-protein] synthase (131 aa).

Residues Asp8 and Glu57 each contribute to the Mg(2+) site.

The protein belongs to the P-Pant transferase superfamily. AcpS family. Requires Mg(2+) as cofactor.

It is found in the cytoplasm. The catalysed reaction is apo-[ACP] + CoA = holo-[ACP] + adenosine 3',5'-bisphosphate + H(+). In terms of biological role, transfers the 4'-phosphopantetheine moiety from coenzyme A to a Ser of acyl-carrier-protein. The chain is Holo-[acyl-carrier-protein] synthase from Thiobacillus denitrificans (strain ATCC 25259 / T1).